Here is a 1483-residue protein sequence, read N- to C-terminus: Heme-responsive zinc finger transcription factor HAP1 (1483 aa).

The span at 1 to 50 shows a compositional bias: polar residues; the sequence is MSNTPYNSSVPSIASMTQSSVSRSPNMHTATTPGANTSSNSPPLHMSSDS. Residues 1 to 56 are disordered; the sequence is MSNTPYNSSVPSIASMTQSSVSRSPNMHTATTPGANTSSNSPPLHMSSDSSKIKRK. Residues cysteine 64, cysteine 67, cysteine 74, cysteine 81, cysteine 84, and cysteine 93 each coordinate Zn(2+). Positions 64–93 form a DNA-binding region, zn(2)-C6 fungal-type; that stretch reads CTICRKRKVKCDKLRPHCQQCTKTGVAHLC. Positions 105–134 form a coiled coil; it reads EKELLKDNELKKLRERVKSLEKTLSKVHSS. The segment at 126 to 208 is disordered; it reads KTLSKVHSSP…ANSSSLSISN (83 aa). A compositionally biased stretch (low complexity) spans 130-142; sequence KVHSSPSSNSLKS. Composition is skewed to polar residues over residues 143-152 and 160-176; these read YNTPESSNLF and TLVNANTGSASSASHMH. Positions 177-208 are enriched in low complexity; the sequence is QQQQQQQQQEQQQDFSRSANANANSSSLSISN. The interval 244–444 is heme-responsive; required for HMC formation; it reads KGDPYLKLLW…NTIPHHQPQS (201 aa). HRM repeat units lie at residues 280–285, 299–304, 323–328, 347–352, 389–394, and 415–420; these read KCPINH, KCPVDH, RCPVDH, and RCPIDH. Polar residues-rich tracts occupy residues 432 to 447 and 706 to 734; these read STHNTIPHHQPQSGSH and QLNATIPATSQDVSNNGSKKANPSTNPTL. Disordered regions lie at residues 432 to 458 and 706 to 767; these read STHNTIPHHQPQSGSHARSHPAQSRKH and QLNA…KENQ. Low complexity predominate over residues 735–759; it reads NNNMSAATTNSSSRSGSADSRSGSN. The HRM 7 repeat unit spans residues 1192–1197; that stretch reads KCPVYQ. Residues 1384-1411 form a disordered region; the sequence is TANTDTSANGSALSTLTSPQGSDLASNS. A compositionally biased stretch (polar residues) spans 1388-1411; the sequence is DTSANGSALSTLTSPQGSDLASNS.

In terms of assembly, binds DNA as a homodimer. Interacts with SRO9 and YDJ1. In the absence of heme, binds to at least four cellular proteins, including YDJ1 and SRO9, forming a high-molecular-weight complex (HMC) which results in repression of its activity and dictates its DNA-binding specificity.

Its subcellular location is the nucleus. In terms of biological role, regulation of oxygen dependent gene expression. It modulates the expression of Iso-1 (CYP1) and Iso-2 (CYP3) cytochrome c. In response to heme, promotes transcription of genes encoding functions required for respiration, controlling oxidative damage and repression of anaerobic genes. Binds to the sequence 5'-CGGNNNTNNCGG-3'. Is non-functional in terms of iso-1 cytochrome c expression in strain S288c and its derivatives. The protein is Heme-responsive zinc finger transcription factor HAP1 (HAP1) of Saccharomyces cerevisiae (Baker's yeast).